An 880-amino-acid polypeptide reads, in one-letter code: Protein transport protein SEC23 A (880 aa).

Over residues 1-13 (MANLPKSSVNYPG) the composition is skewed to polar residues. The disordered stretch occupies residues 1 to 95 (MANLPKSSVN…PPGPPVFNTP (95 aa)). Pro residues predominate over residues 20–36 (PNRPSPQPDRTPVPHSP). The segment covering 57 to 70 (MSSPSMKSPSLLSP) has biased composition (low complexity). Residues cysteine 204, cysteine 207, cysteine 226, and cysteine 229 each contribute to the Zn(2+) site. The segment at 204 to 229 (CLNCGAYSNPYSSILIGSGQWQCVIC) is zinc finger-like.

The protein belongs to the SEC23/SEC24 family. SEC24 subfamily. Component of the coat protein complex II (COPII), composed of at least five proteins: the Sec23/24 complex, the Sec13/31 complex and Sar1. As to expression, mostly expressed in seedlings, roots, cotyledons, leaves, trichomes, leaf primordia and flowers, and, to a lower extent, in mature siliques.

The protein resides in the cytoplasmic vesicle. It is found in the COPII-coated vesicle membrane. It localises to the endoplasmic reticulum membrane. Its subcellular location is the membrane. Functionally, component of the coat protein complex II (COPII) which promotes the formation of transport vesicles from the endoplasmic reticulum (ER). The coat has two main functions, the physical deformation of the endoplasmic reticulum membrane into vesicles and the selection of cargo molecules. May contribute to COPII-coated vesicles formation and ER-Golgi vesicle transport. Together with SEC23D, essential for pollen wall development and exine patterning, probably by regulating endoplasmic reticulum (ER) export of lipids and proteins (e.g. sporopollenin) necessary for pollen wall formation. Also involved in plastid physiology in anther tapetal cells. The protein is Protein transport protein SEC23 A of Arabidopsis thaliana (Mouse-ear cress).